The primary structure comprises 438 residues: Dolichyl-diphosphooligosaccharide--protein glycosyltransferase 48 kDa subunit (438 aa).

Residues 1-25 (MASLRLSVLLVSVSWLLLLVSGLRA) form the signal peptide. The Lumenal portion of the chain corresponds to 26–408 (GPRTLVLMEN…QYERFIPSAY (383 aa)). Residues 409–429 (PYYASAFSVMFGLFIFSIVFL) form a helical membrane-spanning segment. The Cytoplasmic segment spans residues 430-438 (HMKEKEKSD).

It belongs to the DDOST 48 kDa subunit family. In terms of assembly, component of the oligosaccharyltransferase (OST) complex.

Its subcellular location is the endoplasmic reticulum membrane. It functions in the pathway protein modification; protein glycosylation. Subunit of the oligosaccharyl transferase (OST) complex that catalyzes the initial transfer of a defined glycan (Glc(3)Man(9)GlcNAc(2) in eukaryotes) from the lipid carrier dolichol-pyrophosphate to an asparagine residue within an Asn-X-Ser/Thr consensus motif in nascent polypeptide chains, the first step in protein N-glycosylation. N-glycosylation occurs cotranslationally and the complex associates with the Sec61 complex at the channel-forming translocon complex that mediates protein translocation across the endoplasmic reticulum (ER). All subunits are required for a maximal enzyme activity. Required for the assembly of both SST3A- and SS3B-containing OST complexes. The protein is Dolichyl-diphosphooligosaccharide--protein glycosyltransferase 48 kDa subunit of Xenopus laevis (African clawed frog).